Consider the following 2148-residue polypeptide: Polyketide synthase 1 (2148 aa).

The interval 19–261 (FIFGDQSSCN…TPLAVHAPYH (243 aa)) is N-terminal acylcarrier protein transacylase domain (SAT). A Ketosynthase family 3 (KS3) domain is found at 394-829 (ESKIAIIGMS…GGNTALLVED (436 aa)). Catalysis depends on for beta-ketoacyl synthase activity residues Cys-566, His-701, and His-745. The interval 930–1236 (FVFSGQGSQY…MRNKDGWQVL (307 aa)) is malonyl-CoA:ACP transacylase (MAT) domain. Catalysis depends on Ser-1018, which acts as the For acyl/malonyl transferase activity. The product template (PT) domain stretch occupies residues 1310–1624 (TASVHRMVHE…RKVLNTAMPP (315 aa)). Positions 1314 to 1447 (HRMVHESVEK…SSLHFEQPKV (134 aa)) are N-terminal hotdog fold. The PKS/mFAS DH domain maps to 1314-1619 (HRMVHESVEK…FQGIPRKVLN (306 aa)). The Proton acceptor; for dehydratase activity role is filled by His-1346. Residues 1474-1619 (LNSRMSSGVI…FQGIPRKVLN (146 aa)) are C-terminal hotdog fold. Asp-1533 functions as the Proton donor; for dehydratase activity in the catalytic mechanism. Residues 1619–1655 (NTAMPPPKSQNEAPVRSGPAKPAAKPPRSASSEHSGH) are disordered. Over residues 1634 to 1650 (RSGPAKPAAKPPRSASS) the composition is skewed to low complexity. The 75-residue stretch at 1678-1752 (RNPMLPVFKI…DLAAQLGLDT (75 aa)) folds into the Carrier 1 domain. Ser-1712 is subject to O-(pantetheine 4'-phosphoryl)serine. Low complexity predominate over residues 1755 to 1790 (SDQSSGQSSSSGGLSPRSDSIGEITSSVTTPPSLSP). The interval 1755-1796 (SDQSSGQSSSSGGLSPRSDSIGEITSSVTTPPSLSPRGSVSG) is disordered. A Carrier 2 domain is found at 1793 to 1870 (SVSGSQCKDV…SFKHMFQQGH (78 aa)). At Ser-1830 the chain carries O-(pantetheine 4'-phosphoryl)serine. The thioesterase (TE) domain stretch occupies residues 1882 to 2146 (LKQYRATSTL…ERVAAFIRST (265 aa)). The active-site For thioesterase activity is the Ser-1973.

It participates in pigment biosynthesis. Its function is as follows. Polyketide synthase; part of the Pks1 gene cluster that mediates the biosynthesis of an anthraquinone derivative pigment that contributes to conidial pigmentation that provides protection from UV radiation, heat and cold stress. The polyketide synthase Pks1 produces 1-acetyl-2,4,6,8-tetrahydroxy-9,10-anthraquinone though condensation of acetyl-CoA with malonyl-CoA. The dehydratase EthD and the laccase Mlac1 further convert the anthraquinone derivative into the final conidial pigment. The protein is Polyketide synthase 1 of Metarhizium robertsii (strain ARSEF 23 / ATCC MYA-3075) (Metarhizium anisopliae (strain ARSEF 23)).